Reading from the N-terminus, the 114-residue chain is Cytokine SCM-1 beta (114 aa).

A signal peptide spans 1 to 21; that stretch reads MRLLILALLGICSLTAYIVEG. Cysteines 32 and 69 form a disulfide. The interval 91-114 is disordered; it reads RNNMIQTKPTGTQQSTNTAVTLTG.

It belongs to the intercrine gamma family.

The protein resides in the secreted. Functionally, chemotactic activity for lymphocytes but not for monocytes or neutrophils. The chain is Cytokine SCM-1 beta (XCL2) from Homo sapiens (Human).